The sequence spans 95 residues: MTIDLKTIKHISKLSRISVDDAKANKLAGDLNSIFDFIEKLNELNTDNIEPLTSVAETTLKLRADEVKSENIRDQILKNSPEENEDFFVVPRVVE.

It belongs to the GatC family. As to quaternary structure, heterotrimer of A, B and C subunits.

It carries out the reaction L-glutamyl-tRNA(Gln) + L-glutamine + ATP + H2O = L-glutaminyl-tRNA(Gln) + L-glutamate + ADP + phosphate + H(+). The catalysed reaction is L-aspartyl-tRNA(Asn) + L-glutamine + ATP + H2O = L-asparaginyl-tRNA(Asn) + L-glutamate + ADP + phosphate + 2 H(+). In terms of biological role, allows the formation of correctly charged Asn-tRNA(Asn) or Gln-tRNA(Gln) through the transamidation of misacylated Asp-tRNA(Asn) or Glu-tRNA(Gln) in organisms which lack either or both of asparaginyl-tRNA or glutaminyl-tRNA synthetases. The reaction takes place in the presence of glutamine and ATP through an activated phospho-Asp-tRNA(Asn) or phospho-Glu-tRNA(Gln). The protein is Aspartyl/glutamyl-tRNA(Asn/Gln) amidotransferase subunit C of Pelagibacter ubique (strain HTCC1062).